The chain runs to 83 residues: Short neurotoxin 1 (83 aa).

The N-terminal stretch at 1–21 (MKTLLLTLVVVTIVCLDLGYT) is a signal peptide. Disulfide bonds link Cys-24–Cys-45, Cys-38–Cys-62, Cys-64–Cys-75, and Cys-76–Cys-81.

The protein belongs to the three-finger toxin family. Short-chain subfamily. Type I alpha-neurotoxin sub-subfamily. In terms of tissue distribution, expressed by the venom gland.

It is found in the secreted. Functionally, binds to muscle nicotinic acetylcholine receptor (nAChR) and inhibit acetylcholine from binding to the receptor, thereby impairing neuromuscular transmission. The polypeptide is Short neurotoxin 1 (Pseudechis australis (Mulga snake)).